Reading from the N-terminus, the 135-residue chain is Regulator of ribonuclease activity B (135 aa).

The disordered stretch occupies residues 114 to 135 (WGTYFESDEDDEEDESEDKPEA). Acidic residues predominate over residues 119 to 135 (ESDEDDEEDESEDKPEA).

It belongs to the RraB family. Interacts with the C-terminal region of Rne.

Its subcellular location is the cytoplasm. In terms of biological role, globally modulates RNA abundance by binding to RNase E (Rne) and regulating its endonucleolytic activity. Can modulate Rne action in a substrate-dependent manner by altering the composition of the degradosome. The polypeptide is Regulator of ribonuclease activity B (Photobacterium profundum (strain SS9)).